A 71-amino-acid chain; its full sequence is Pre-hexon-linking protein VIII (71 aa).

It belongs to the adenoviridae hexon-linking protein family. In terms of assembly, interacts with the peripentonal hexons as well as the hexons in the facets. Part of a complex composed of the core-capsid bridging protein, the endosome lysis protein VI and the hexon-linking protein VIII; these interactions bridge the virus core to the capsid. Cleaved by the viral protease during virion maturation. May cause the middle segment to be shed from the capsid.

The protein localises to the host nucleus. It is found in the virion. Functionally, structural component of the virion that acts as a cement protein on the capsid interior and which glue the peripentonal hexons and group-of-nine hexons together. In Canine adenovirus serotype 1 (strain Glaxo) (CAdV-1), this protein is Pre-hexon-linking protein VIII.